We begin with the raw amino-acid sequence, 162 residues long: Toluate 1,2-dioxygenase subunit beta (162 aa).

Belongs to the bacterial ring-hydroxylating dioxygenase beta subunit family. In terms of assembly, this dioxygenase system consists of three proteins: the two subunits of the hydroxylase component (XylX and XylY), and an electron transfer component (XylZ).

Its pathway is xenobiotic degradation; toluene degradation. The sequence is that of Toluate 1,2-dioxygenase subunit beta (xylY) from Pseudomonas putida (Arthrobacter siderocapsulatus).